We begin with the raw amino-acid sequence, 671 residues long: DNA ligase (671 aa).

Residues 32-36 (DAEYD), 81-82 (SL), and E113 contribute to the NAD(+) site. The active-site N6-AMP-lysine intermediate is the K115. The NAD(+) site is built by R136, E173, K290, and K314. Residues C408, C411, C426, and C432 each contribute to the Zn(2+) site. One can recognise a BRCT domain in the interval 593-671 (EIDSPFAGKT…EAEMLRLLGS (79 aa)).

It belongs to the NAD-dependent DNA ligase family. LigA subfamily. The cofactor is Mg(2+). Mn(2+) is required as a cofactor.

The enzyme catalyses NAD(+) + (deoxyribonucleotide)n-3'-hydroxyl + 5'-phospho-(deoxyribonucleotide)m = (deoxyribonucleotide)n+m + AMP + beta-nicotinamide D-nucleotide.. Its function is as follows. DNA ligase that catalyzes the formation of phosphodiester linkages between 5'-phosphoryl and 3'-hydroxyl groups in double-stranded DNA using NAD as a coenzyme and as the energy source for the reaction. It is essential for DNA replication and repair of damaged DNA. This is DNA ligase from Escherichia coli O9:H4 (strain HS).